Here is a 298-residue protein sequence, read N- to C-terminus: 4-hydroxy-tetrahydrodipicolinate synthase (298 aa).

T51 lines the pyruvate pocket. The active-site Proton donor/acceptor is the Y139. K167 functions as the Schiff-base intermediate with substrate in the catalytic mechanism. Residue I209 coordinates pyruvate.

This sequence belongs to the DapA family. In terms of assembly, homotetramer; dimer of dimers.

The protein resides in the cytoplasm. The enzyme catalyses L-aspartate 4-semialdehyde + pyruvate = (2S,4S)-4-hydroxy-2,3,4,5-tetrahydrodipicolinate + H2O + H(+). It participates in amino-acid biosynthesis; L-lysine biosynthesis via DAP pathway; (S)-tetrahydrodipicolinate from L-aspartate: step 3/4. Its function is as follows. Catalyzes the condensation of (S)-aspartate-beta-semialdehyde [(S)-ASA] and pyruvate to 4-hydroxy-tetrahydrodipicolinate (HTPA). This is 4-hydroxy-tetrahydrodipicolinate synthase from Histophilus somni (strain 129Pt) (Haemophilus somnus).